A 657-amino-acid chain; its full sequence is Oleate activated transcription factor 3 (657 aa).

The zn(2)-C6 fungal-type DNA-binding region spans C21 to C48.

The protein belongs to the OAF3 family.

The protein localises to the cytoplasm. Its subcellular location is the nucleus. It is found in the mitochondrion. In terms of biological role, transcriptional inhibitor with a significantly increased number of target genes in response to oleate. This is Oleate activated transcription factor 3 (OAF3) from Kluyveromyces lactis (strain ATCC 8585 / CBS 2359 / DSM 70799 / NBRC 1267 / NRRL Y-1140 / WM37) (Yeast).